A 216-amino-acid chain; its full sequence is MQMPDVGSLLLVVVIMLGLLPFAAMVVTSYTKIVVVLGLLRNAIGVQQVPPNMVLNGVALLVSCFVMAPVGMEAFKAAAQNYGAGSDNSRVVVLLDACREPFRQFLLKHTREREKAFFMRSAQQIWPKDKAATLKSDDLLVLAPAFTLSELTEAFRIGFLLYLVFIVIDLVVANALMAMGLSQVTPTNVAIPFKLLLFVAMDGWSMLIHGLVLSYR.

4 consecutive transmembrane segments (helical) span residues 6–26, 55–75, 157–177, and 193–213; these read VGSL…AAMV, LNGV…MEAF, IGFL…NALM, and FKLL…GLVL.

Belongs to the FliP/MopC/SpaP family.

It is found in the cell membrane. Functionally, important for pathogenicity. The protein is Pathogenicity-related ORF2 of Xanthomonas campestris pv. glycines.